Consider the following 702-residue polypeptide: Cytolytic toxin-alpha (702 aa).

A structural MACPF/CDC pore-forming domain region spans residues 2–265 (SSDIIMAGLG…KADLLVRDIS (264 aa)). N-linked (GlcNAc...) asparagine glycans are attached at residues asparagine 93, asparagine 100, asparagine 201, asparagine 287, and asparagine 311. Positions 266–385 (QGLVRKVHSI…DIIEETKHKA (120 aa)) are structural FAT domain. The tract at residues 386 to 513 (VLSQSQMVKD…PIISAVEKIV (128 aa)) is thioredoxin (THX) domain. One can recognise a B30.2/SPRY domain in the interval 505–702 (IISAVEKIVD…RPYHGTVRLL (198 aa)). The N-linked (GlcNAc...) asparagine glycan is linked to asparagine 530.

This sequence belongs to the SNTX/VTX toxin family. Heterodimer of alpha and beta subunits; non-covalently linked. Also associates into tetramers or even higher aggregates. Post-translationally, intrachain disulfide bonds may be present in the heterodimer. In terms of tissue distribution, expressed by the venom gland.

It is found in the secreted. Functionally, this heterodimer induces potent hemolytic activities (when tested on rabbit erythrocytes, EC(50)=25-56 ng/mL) due to its ability to form pores in the cell membrane. The pore may be composed of 10 alpha/beta heterodimers. The toxin shows cardiovascular effects that include a vasorelaxant action that may involve the L-arginine-nitric oxid synthase pathway. In addition, it displays edema-inducing activities, increases vascular permeability. It also shows myotoxic activities and interferes irreversibly with neuromuscular function. It also induces irreversible platelet aggregation in rabbit or rat (but not in human or mouse) whole blood. In addition, it has been observed to increase spontaneous quantal acetylcholine release from isolated frog cutaneous pectoris motor endings. The sequence is that of Cytolytic toxin-alpha from Scorpaena plumieri (Spotted scorpionfish).